Consider the following 184-residue polypeptide: Casparian strip membrane protein 3 (184 aa).

Over 1–24 (MEGSEEHGETSKAPLSRGVSKGVS) the chain is Cytoplasmic. Residues 25-45 (ILDVILRFVAIIGTLASAIAM) traverse the membrane as a helical segment. Over 46–72 (GTTNQTLPFFTQFIRFKAQYSDLPTLT) the chain is Extracellular. N-linked (GlcNAc...) asparagine glycosylation occurs at N49. Residues 73–93 (FFVVANSIVSAYLILSLPLSI) traverse the membrane as a helical segment. At 94 to 105 (VHVIRSRAKYSR) the chain is on the cytoplasmic side. A helical membrane pass occupies residues 106–126 (LILIFFDAAMLALVTAGASAA). At 127–159 (AAIVYLAHKGNARANWLAICQQFDSFCERISGS) the chain is on the extracellular side. Residues 160-180 (LIGSFAAMVVLVLLIFLSAIA) form a helical membrane-spanning segment. At 181 to 184 (LARR) the chain is on the cytoplasmic side.

It belongs to the Casparian strip membrane proteins (CASP) family. In terms of assembly, homodimer and heterodimers.

The protein resides in the cell membrane. Regulates membrane-cell wall junctions and localized cell wall deposition. Required for establishment of the Casparian strip membrane domain (CSD) and the subsequent formation of Casparian strips, a cell wall modification of the root endodermis that determines an apoplastic barrier between the intraorganismal apoplasm and the extraorganismal apoplasm and prevents lateral diffusion. In Oryza sativa subsp. indica (Rice), this protein is Casparian strip membrane protein 3.